A 452-amino-acid chain; its full sequence is Ribosomal protein uS12 methylthiotransferase RimO (452 aa).

The MTTase N-terminal domain occupies 3–118; sequence GKIGFVSLGC…VMQVIHLHLP (116 aa). [4Fe-4S] cluster-binding residues include Cys-12, Cys-48, Cys-77, Cys-149, Cys-153, and Cys-156. Residues 135–382 enclose the Radical SAM core domain; sequence LTPKHYAYLK…AKAEEISVGR (248 aa). Residues 384–452 form the TRAM domain; it reads AKKIGKRLQV…SQGHDLIAET (69 aa).

It belongs to the methylthiotransferase family. RimO subfamily. It depends on [4Fe-4S] cluster as a cofactor.

The protein localises to the cytoplasm. It catalyses the reaction L-aspartate(89)-[ribosomal protein uS12]-hydrogen + (sulfur carrier)-SH + AH2 + 2 S-adenosyl-L-methionine = 3-methylsulfanyl-L-aspartate(89)-[ribosomal protein uS12]-hydrogen + (sulfur carrier)-H + 5'-deoxyadenosine + L-methionine + A + S-adenosyl-L-homocysteine + 2 H(+). Catalyzes the methylthiolation of an aspartic acid residue of ribosomal protein uS12. This Polynucleobacter necessarius subsp. necessarius (strain STIR1) protein is Ribosomal protein uS12 methylthiotransferase RimO.